Here is a 1404-residue protein sequence, read N- to C-terminus: DNA-directed RNA polymerase subunit beta' (1404 aa).

Zn(2+) is bound by residues C70, C72, C85, and C88. Residues D460, D462, and D464 each contribute to the Mg(2+) site. Zn(2+) is bound by residues C814, C888, C895, and C898.

This sequence belongs to the RNA polymerase beta' chain family. As to quaternary structure, the RNAP catalytic core consists of 2 alpha, 1 beta, 1 beta' and 1 omega subunit. When a sigma factor is associated with the core the holoenzyme is formed, which can initiate transcription. It depends on Mg(2+) as a cofactor. The cofactor is Zn(2+).

The enzyme catalyses RNA(n) + a ribonucleoside 5'-triphosphate = RNA(n+1) + diphosphate. Functionally, DNA-dependent RNA polymerase catalyzes the transcription of DNA into RNA using the four ribonucleoside triphosphates as substrates. This chain is DNA-directed RNA polymerase subunit beta', found in Shewanella halifaxensis (strain HAW-EB4).